A 226-amino-acid polypeptide reads, in one-letter code: MAMNNILGLFAHSPLKPLQKHSEKVTECSDLLIPFFQTTFSKNWEQAEEKRLEISQCEREADSLKREIRLKLPRGLFLPIDRTDLLELVTQQDKLANYAKDIAGRMIGRQFGIPEEMQEEFLHYVKRSLDAIHQAHRVIEEMDKLLETGFKGRELKLVNDMIQELDSIEDDTDQMQIKLRKMLYTIESRYNPIDVMFLYKIIEWVGVLADQAQRVGSRIELMLARS.

Belongs to the UPF0111 family.

The chain is UPF0111 protein HI_1603 from Haemophilus influenzae (strain ATCC 51907 / DSM 11121 / KW20 / Rd).